The following is a 225-amino-acid chain: MQGLAQTTMAVVPGGAPPSENSVIKSQMWNKNKEKFLKGEPKVLGAIQVMIAFINFSLGIIIILNRVSERFMSVLLLAPFWGSIMFIFSGSLSIAAGVKPTKAMIISSLSVNTISSVLAVAASIIGVISVISGVFRQFRSQPAIASLDVLMTILNMLEFCIAVSVSAFGCKASCCNSSEVLVVLPSNSAVTVTAPPMILQPLPPSECQGKNVPENLYRNQPGEIV.

Over 1–42 (MQGLAQTTMAVVPGGAPPSENSVIKSQMWNKNKEKFLKGEPK) the chain is Cytoplasmic. A helical membrane pass occupies residues 43–63 (VLGAIQVMIAFINFSLGIIII). The Extracellular portion of the chain corresponds to 64-73 (LNRVSERFMS). The chain crosses the membrane as a helical span at residues 74–94 (VLLLAPFWGSIMFIFSGSLSI). Over 95–113 (AAGVKPTKAMIISSLSVNT) the chain is Cytoplasmic. The chain crosses the membrane as a helical span at residues 114 to 134 (ISSVLAVAASIIGVISVISGV). Residues 135-148 (FRQFRSQPAIASLD) lie on the Extracellular side of the membrane. Residues 149 to 169 (VLMTILNMLEFCIAVSVSAFG) form a helical membrane-spanning segment. The Cytoplasmic segment spans residues 170 to 225 (CKASCCNSSEVLVVLPSNSAVTVTAPPMILQPLPPSECQGKNVPENLYRNQPGEIV).

Belongs to the MS4A family. In terms of tissue distribution, expressed in thymus, spleen, peripheral lymph node, liver, kidney, heart, colon, lung, and testes.

It localises to the membrane. In terms of biological role, may be involved in signal transduction as a component of a multimeric receptor complex. The polypeptide is Membrane-spanning 4-domains subfamily A member 4D (Ms4a4d) (Mus musculus (Mouse)).